A 909-amino-acid chain; its full sequence is Aconitate hydratase A (909 aa).

3 residues coordinate [4Fe-4S] cluster: Cys450, Cys516, and Cys519.

The protein belongs to the aconitase/IPM isomerase family. In terms of assembly, monomer. Requires [4Fe-4S] cluster as cofactor.

It catalyses the reaction citrate = D-threo-isocitrate. It carries out the reaction 3-hydroxybutane-1,2,3-tricarboxylate = 2-methyl-cis-aconitate + H2O. It functions in the pathway carbohydrate metabolism; tricarboxylic acid cycle; isocitrate from oxaloacetate: step 2/2. Functionally, involved in both the tricarboxylic acid (TCA) and methylcitric acid cycles. Catalyzes the reversible isomerization of citrate to isocitrate via cis-aconitate. Also catalyzes the rehydration of 2-methyl-cis-aconitate to produce 2-methylisocitrate. The apo form of AcnA functions as a RNA-binding regulatory protein which plays a role in the regulation of citrate concentration and in the sporulation. To prevent the accumulation of excessive levels of citrate, it binds near the 5' end of the citZ mRNA, decreasing its stability and thereby limiting the concentration of citrate synthase in the cell. Aconitase also binds to the gerE transcript late in sporulation and stabilizes it for translation, thereby increasing the rate and level of GerE protein accumulation. The protein is Aconitate hydratase A (citB) of Bacillus subtilis (strain 168).